A 122-amino-acid polypeptide reads, in one-letter code: Large ribosomal subunit protein uL14 (122 aa).

Belongs to the universal ribosomal protein uL14 family. Part of the 50S ribosomal subunit. Forms a cluster with proteins L3 and L19. In the 70S ribosome, L14 and L19 interact and together make contacts with the 16S rRNA in bridges B5 and B8.

Its function is as follows. Binds to 23S rRNA. Forms part of two intersubunit bridges in the 70S ribosome. This is Large ribosomal subunit protein uL14 from Francisella tularensis subsp. holarctica (strain LVS).